The following is a 93-amino-acid chain: Chaperone NapD (93 aa).

Belongs to the NapD family. In terms of assembly, interacts with the cytoplasmic NapA precursor.

It is found in the cytoplasm. In terms of biological role, chaperone for NapA, the catalytic subunit of the periplasmic nitrate reductase. It binds directly and specifically to the twin-arginine signal peptide of NapA, preventing premature interaction with the Tat translocase and premature export. The polypeptide is Chaperone NapD (Haemophilus influenzae (strain ATCC 51907 / DSM 11121 / KW20 / Rd)).